The primary structure comprises 623 residues: Glutathione import ATP-binding protein GsiA (623 aa).

ABC transporter domains lie at 15-269 (VENL…RALL) and 314-564 (LRVR…RKLL). ATP-binding positions include 49-56 (GESGSGKS) and 357-364 (GESGSGKS).

Belongs to the ABC transporter superfamily. Glutathione importer (TC 3.A.1.5.11) family. As to quaternary structure, the complex is composed of two ATP-binding proteins (GsiA), two transmembrane proteins (GsiC and GsiD) and a solute-binding protein (GsiB).

It localises to the cell inner membrane. The catalysed reaction is glutathione(out) + ATP + H2O = glutathione(in) + ADP + phosphate + H(+). Functionally, part of the ABC transporter complex GsiABCD involved in glutathione import. Responsible for energy coupling to the transport system. The sequence is that of Glutathione import ATP-binding protein GsiA from Escherichia coli O6:H1 (strain CFT073 / ATCC 700928 / UPEC).